A 636-amino-acid chain; its full sequence is uncharacterized protein (636 aa).

3 consecutive transmembrane segments (helical) span residues 12-32, 34-54, and 75-95; these read AVIY…FGSI, IMHL…TTTG, and IGAG…FMSF. The region spanning 112-231 is the RCK N-terminal domain; the sequence is KNHFILCGFG…KKAGANRIIS (120 aa).

It is found in the cell membrane. This is an uncharacterized protein from Methanothermus fervidus (strain ATCC 43054 / DSM 2088 / JCM 10308 / V24 S).